Here is a 342-residue protein sequence, read N- to C-terminus: Inositol 2-dehydrogenase 2 (342 aa).

The protein belongs to the Gfo/Idh/MocA family. As to quaternary structure, homotetramer.

The catalysed reaction is myo-inositol + NAD(+) = scyllo-inosose + NADH + H(+). Involved in the oxidation of myo-inositol (MI) to 2-keto-myo-inositol (2KMI or 2-inosose). In Mycolicibacterium vanbaalenii (strain DSM 7251 / JCM 13017 / BCRC 16820 / KCTC 9966 / NRRL B-24157 / PYR-1) (Mycobacterium vanbaalenii), this protein is Inositol 2-dehydrogenase 2.